A 498-amino-acid polypeptide reads, in one-letter code: ATP synthase subunit beta, chloroplastic (498 aa).

Gly-172 to Thr-179 serves as a coordination point for ATP.

This sequence belongs to the ATPase alpha/beta chains family. F-type ATPases have 2 components, CF(1) - the catalytic core - and CF(0) - the membrane proton channel. CF(1) has five subunits: alpha(3), beta(3), gamma(1), delta(1), epsilon(1). CF(0) has four main subunits: a(1), b(1), b'(1) and c(9-12).

It is found in the plastid. Its subcellular location is the chloroplast thylakoid membrane. The catalysed reaction is ATP + H2O + 4 H(+)(in) = ADP + phosphate + 5 H(+)(out). Functionally, produces ATP from ADP in the presence of a proton gradient across the membrane. The catalytic sites are hosted primarily by the beta subunits. The polypeptide is ATP synthase subunit beta, chloroplastic (Cinnamomum camphora (Camphor tree)).